The sequence spans 609 residues: Laccase-1 (609 aa).

The first 20 residues, 1 to 20 (MYLSTVLFPLLALNLGLSHA), serve as a signal peptide directing secretion. Residues 45 to 141 (VFTNGEYPGP…DGQVGAMYIR (97 aa)) enclose the Plastocyanin-like 1 domain. Asparagine 75 carries N-linked (GlcNAc...) asparagine glycosylation. Positions 79, 81, 123, and 125 each coordinate Cu cation. N-linked (GlcNAc...) asparagine glycosylation occurs at asparagine 257. The Plastocyanin-like 2 domain occupies 270–372 (TPSSVEPPVI…MSVYAILSYV (103 aa)). N-linked (GlcNAc...) asparagine glycans are attached at residues asparagine 403, asparagine 443, and asparagine 486. One can recognise a Plastocyanin-like 3 domain in the interval 463-602 (STPLLFEPDP…MGGMALALLD (140 aa)). Cu cation contacts are provided by histidine 508, histidine 511, and histidine 513. Residues asparagine 531 and asparagine 546 are each glycosylated (N-linked (GlcNAc...) asparagine). Histidine 585, cysteine 586, histidine 587, and histidine 591 together coordinate Cu cation.

This sequence belongs to the multicopper oxidase family. The cofactor is Cu cation.

Its subcellular location is the secreted. The catalysed reaction is 4 hydroquinone + O2 = 4 benzosemiquinone + 2 H2O. In terms of biological role, required for the conversion of the yellow polyketide pigment synthesized by wA to the conidial green pigment. The protein is Laccase-1 (yA) of Emericella nidulans (strain FGSC A4 / ATCC 38163 / CBS 112.46 / NRRL 194 / M139) (Aspergillus nidulans).